We begin with the raw amino-acid sequence, 221 residues long: Sugar transporter SWEET1 (221 aa).

Helical transmembrane passes span 3-23 (AGGVADSFLSSACVLFTLGMF), 44-63 (FLPFLTTDVNNLGWLSYGVL), 68-88 (TLIIVNTVGAVLQTLYILAYL), 102-122 (ATLLAVLLLGYGYFWLLVPDL), 129-149 (LGLFCSVFTISMYLSPLADLA), 160-180 (LSFSLTIATLLSSTSWSIYGF), and 186-206 (YITVPNLPGILTGFIRLVLFY). The region spanning 10–94 (FLSSACVLFT…LAYLHYSPQK (85 aa)) is the MtN3/slv 1 domain. The region spanning 127-212 (QQLGLFCSVF…VLFYKYPPEQ (86 aa)) is the MtN3/slv 2 domain. Residues 149–221 (AKIIQTKSTQ…QDTKYRLLQT (73 aa)) form a mediates interaction with TRPV2 region.

It belongs to the SWEET sugar transporter family. As to quaternary structure, interacts with TRPV2; the interaction probably occurs intracellularly and depends on TRPV2 N-glycosylation.

It localises to the golgi apparatus membrane. It is found in the cell membrane. In terms of biological role, mediates sugar transport across membranes. May stimulate V(D)J recombination by the activation of RAG1. The chain is Sugar transporter SWEET1 (Slc50a1) from Rattus norvegicus (Rat).